The primary structure comprises 100 residues: UPF0251 protein VV2_0946 (100 aa).

It belongs to the UPF0251 family.

This chain is UPF0251 protein VV2_0946, found in Vibrio vulnificus (strain CMCP6).